Here is a 658-residue protein sequence, read N- to C-terminus: Exoribonuclease 2 (658 aa).

An RNB domain is found at 189–530 (REDLTSLYFT…VNHRLIKQVL (342 aa)). Residues 576–658 (AVEFDCEIAD…ETRSIVGNII (83 aa)) form the S1 motif domain.

The protein belongs to the RNR ribonuclease family. RNase II subfamily.

It is found in the cytoplasm. The enzyme catalyses Exonucleolytic cleavage in the 3'- to 5'-direction to yield nucleoside 5'-phosphates.. Functionally, involved in mRNA degradation. Hydrolyzes single-stranded polyribonucleotides processively in the 3' to 5' direction. This Actinobacillus pleuropneumoniae serotype 3 (strain JL03) protein is Exoribonuclease 2.